The sequence spans 332 residues: Leucine carboxyl methyltransferase 1 homolog (332 aa).

Residues lysine 22, arginine 57, glycine 83, aspartate 107, aspartate 153–leucine 154, and glutamate 180 contribute to the S-adenosyl-L-methionine site.

It belongs to the methyltransferase superfamily. LCMT family.

It is found in the cytoplasm. It localises to the membrane. It catalyses the reaction [phosphatase 2A protein]-C-terminal L-leucine + S-adenosyl-L-methionine = [phosphatase 2A protein]-C-terminal L-leucine methyl ester + S-adenosyl-L-homocysteine. Functionally, methylates the carboxyl group of the C-terminal leucine residue of protein phosphatase 2A (PP2A) catalytic subunits to form alpha-leucine ester residues. Involved in brassinosteroid (BR) signaling. Plays a negative role in BR signaling pathway. Functions as a positive regulator of BRI1 receptor-kinase degradation. Methylates PP2A, thus facilitating its association with activated BRI1. This leads to receptor dephosphorylation and degradation, and thus to the termination of BR signaling. May act upstream of ASK7/BIN2. Involved in methylation of PP2A during environmental stress responses. This is Leucine carboxyl methyltransferase 1 homolog from Arabidopsis thaliana (Mouse-ear cress).